Here is a 1243-residue protein sequence, read N- to C-terminus: Zinc finger protein ZFAT (1243 aa).

Residues 12 to 35 (FMCKCCNLFSPNQSELLSHVSEKH) form a C2H2-type 1 zinc finger. 2 disordered regions span residues 51-116 (PLST…PSSL) and 147-189 (GEAG…GKEA). A compositionally biased stretch (basic residues) spans 70–81 (MKRKRGRPKGST). A C2H2-type 2; degenerate zinc finger spans residues 116 to 141 (LECSKCCRKFSNTRQLRKHICIIVLN). Residues 156 to 189 (ELEKKCKEDDREKASKRPRSQKTEKVQKISGKEA) are compositionally biased toward basic and acidic residues. 7 C2H2-type zinc fingers span residues 271-293 (FTCE…LRIH), 299-321 (YKCP…LRKH), 326-349 (FACD…ERVH), 354-377 (QHCR…RDAH), 404-426 (YDCH…MLVH), 432-454 (FACE…VRKH), and 458-481 (YVCA…KEVH). Zn(2+)-binding residues include Cys-273, Cys-276, His-289, His-293, Cys-301, Cys-304, His-317, His-321, Cys-328, Cys-331, His-344, His-349, Cys-356, Cys-359, His-372, His-377, Cys-406, Cys-409, His-422, and His-426. Zn(2+) contacts are provided by Cys-460, Cys-463, His-476, and His-481. Disordered stretches follow at residues 534-570 (EACP…AEST), 603-625 (TSSA…SSVQ), and 638-705 (AQSA…CKAA). Residues 610-620 (AAPEKPPDMQH) show a composition bias toward basic and acidic residues. The segment covering 638–650 (AQSAGSDQESHGA) has biased composition (polar residues). C2H2-type zinc fingers lie at residues 742–764 (LECE…VRTH), 770–793 (YYCS…IQKH), 798–822 (LKCP…LKVH), 830–853 (YSCP…KTNH), 880–903 (MKCP…IWAH), 909–931 (FKCS…MNRH), 937–959 (HLCD…KLLH), 966–988 (FKCT…MEQH), 994–1017 (FRCA…NRKH), and 1041–1064 (LKCP…KNKH). 24 residues coordinate Zn(2+): Cys-772, Cys-775, His-788, His-793, Cys-800, Cys-805, His-818, His-822, Cys-832, Cys-835, His-848, His-853, Cys-882, Cys-885, His-899, His-903, Cys-911, Cys-914, His-927, His-931, Cys-939, Cys-942, His-955, and Leu-958.

In terms of tissue distribution, isoform 1 is strongly expressed in placenta, spleen, kidney, testis and peripheral blood leukocytes. Expressed in CD4+ and CD8+ T-cells, CD19+ B-cells and CB14+ monocytes. Isoform 3 is strongly expressed in placenta, ovary, tonsil, CD19+ B-cells and CD14+ monocytes.

It localises to the nucleus. Its subcellular location is the cytoplasm. It is found in the cytosol. May be involved in transcriptional regulation. Overexpression causes down-regulation of a number of genes involved in the immune response. Some genes are also up-regulated. The polypeptide is Zinc finger protein ZFAT (ZFAT) (Homo sapiens (Human)).